Reading from the N-terminus, the 292-residue chain is Small ribosomal subunit biogenesis GTPase RsgA (292 aa).

Residues 64-221 (RSELFRPAVA…LVDTPGFSSL (158 aa)) enclose the CP-type G domain. Residues 113–116 (NKMD) and 164–172 (GPSGVGKST) contribute to the GTP site. Zn(2+) is bound by residues cysteine 245, cysteine 250, histidine 252, and cysteine 258.

The protein belongs to the TRAFAC class YlqF/YawG GTPase family. RsgA subfamily. In terms of assembly, monomer. Associates with 30S ribosomal subunit, binds 16S rRNA. The cofactor is Zn(2+).

It localises to the cytoplasm. One of several proteins that assist in the late maturation steps of the functional core of the 30S ribosomal subunit. Helps release RbfA from mature subunits. May play a role in the assembly of ribosomal proteins into the subunit. Circularly permuted GTPase that catalyzes slow GTP hydrolysis, GTPase activity is stimulated by the 30S ribosomal subunit. The polypeptide is Small ribosomal subunit biogenesis GTPase RsgA (Clostridium botulinum (strain ATCC 19397 / Type A)).